The chain runs to 168 residues: uncharacterized protein (168 aa).

Pro residues predominate over residues methionine 1–asparagine 10. 2 disordered regions span residues methionine 1 to glutamine 23 and glutamate 117 to glutamine 143.

This is an uncharacterized protein from Homo sapiens (Human).